A 41-amino-acid chain; its full sequence is Photosystem I reaction center subunit IX (41 aa).

Residues 7–27 form a helical membrane-spanning segment; sequence YLSTAPVLLTLWMTFTAGFII.

It belongs to the PsaJ family.

It localises to the plastid. The protein resides in the chloroplast thylakoid membrane. Its function is as follows. May help in the organization of the PsaE and PsaF subunits. In Trieres chinensis (Marine centric diatom), this protein is Photosystem I reaction center subunit IX.